Here is a 112-residue protein sequence, read N- to C-terminus: Histone H3-4 (112 aa).

The disordered stretch occupies residues 1–31 (QTGAKAPRKALANKAARKTAPADGGVKKPHR).

It belongs to the histone H3 family. As to quaternary structure, the nucleosome is a histone octamer containing two molecules each of H2A, H2B, H3 and H4 assembled in one H3-H4 heterotetramer and two H2A-H2B heterodimers. The octamer wraps approximately 147 bp of DNA.

The protein resides in the nucleus. Its subcellular location is the chromosome. Functionally, core component of nucleosome. Nucleosomes wrap and compact DNA into chromatin, limiting DNA accessibility to the cellular machineries which require DNA as a template. Histones thereby play a central role in transcription regulation, DNA repair, DNA replication and chromosomal stability. DNA accessibility is regulated via a complex set of post-translational modifications of histones, also called histone code, and nucleosome remodeling. The protein is Histone H3-4 (H3-4) of Stylonychia lemnae (Ciliate).